Here is a 435-residue protein sequence, read N- to C-terminus: Protein translocase subunit SecY (435 aa).

Helical transmembrane passes span 19–39 (ILFTIFIILVFRIGTTITVPG), 68–88 (FSVFALGVSPYITASIVVQLL), 116–136 (YIALVLAFVQAIGITAGFDTL), 147–167 (VQTYALICVLLATGSMIVTWL), 179–199 (GVSMIIFAGIVSAIPDMIKGI), 216–236 (FIFVGILIVAVLLIIYFTTFV), 269–289 (VIPVIFASSITAAPAAIFQVV), 311–331 (ISGMFMYAFLIVLFTFFYTFV), 372–392 (VGSLFLGFISILPILAKDVFG), and 395–415 (DAVALGGTSLLIIISTGIEGM).

Belongs to the SecY/SEC61-alpha family. Component of the Sec protein translocase complex. Heterotrimer consisting of SecY, SecE and SecG subunits. The heterotrimers can form oligomers, although 1 heterotrimer is thought to be able to translocate proteins. Interacts with the ribosome. Interacts with SecDF, and other proteins may be involved. Interacts with SecA.

The protein resides in the cell membrane. In terms of biological role, the central subunit of the protein translocation channel SecYEG. Consists of two halves formed by TMs 1-5 and 6-10. These two domains form a lateral gate at the front which open onto the bilayer between TMs 2 and 7, and are clamped together by SecE at the back. The channel is closed by both a pore ring composed of hydrophobic SecY resides and a short helix (helix 2A) on the extracellular side of the membrane which forms a plug. The plug probably moves laterally to allow the channel to open. The ring and the pore may move independently. This Streptococcus sanguinis (strain SK36) protein is Protein translocase subunit SecY.